A 124-amino-acid polypeptide reads, in one-letter code: Large ribosomal subunit protein bL12 (124 aa).

This sequence belongs to the bacterial ribosomal protein bL12 family. Homodimer. Part of the ribosomal stalk of the 50S ribosomal subunit. Forms a multimeric L10(L12)X complex, where L10 forms an elongated spine to which 2 to 4 L12 dimers bind in a sequential fashion. Binds GTP-bound translation factors.

Functionally, forms part of the ribosomal stalk which helps the ribosome interact with GTP-bound translation factors. Is thus essential for accurate translation. This is Large ribosomal subunit protein bL12 from Desulfitobacterium hafniense (strain DSM 10664 / DCB-2).